Reading from the N-terminus, the 459-residue chain is Cysteine--tRNA ligase (459 aa).

C28 lines the Zn(2+) pocket. A 'HIGH' region motif is present at residues 30-40; that stretch reads ITIYDYCHIGH. Residues C209, H234, and E238 each contribute to the Zn(2+) site. Positions 266-270 match the 'KMSKS' region motif; that stretch reads KMSKS. K269 contacts ATP.

It belongs to the class-I aminoacyl-tRNA synthetase family. Monomer. The cofactor is Zn(2+).

The protein resides in the cytoplasm. It catalyses the reaction tRNA(Cys) + L-cysteine + ATP = L-cysteinyl-tRNA(Cys) + AMP + diphosphate. This is Cysteine--tRNA ligase from Pseudoalteromonas translucida (strain TAC 125).